Reading from the N-terminus, the 307-residue chain is Potassium channel subfamily K member 7 (307 aa).

Residues 1-10 (MGSLKPWARY) lie on the Cytoplasmic side of the membrane. A helical transmembrane segment spans residues 11-31 (LLLLMAHLLAMGLGAVVLQAL). Asn83 carries an N-linked (GlcNAc...) asparagine glycan. The pore-forming intramembrane region spans 92–118 (LPSALLFTASILTTTGYGHMAPLSSGG). Residues 120–140 (AFCVVYAALGLPASLALVAAL) traverse the membrane as a helical segment. Topologically, residues 141-172 (RHCLLPVFSRPGDWVAIRWQLAPAQAALLQAA) are cytoplasmic. A helical transmembrane segment spans residues 173-193 (GLGLLVACVFMLLPALVLWGV). Positions 199–227 (LLEAIYFCFGSLSTIGLGDLLPAHGRGLH) form an intramembrane region, pore-forming. The helical transmembrane segment at 233-253 (LGQFALLGYLLLGLLAMLLAV) threads the bilayer. The Cytoplasmic segment spans residues 254–307 (ETFSELPQVRAMVKFFGPSGSRTDEDQDGILGQDELALSTVLPDAPVLGPTTPA).

It belongs to the two pore domain potassium channel (TC 1.A.1.8) family. In terms of assembly, homodimer. Detected in embryo, eye, lung and liver. Weakly expressed in colon, testis, atria, kidney, intestine, bladder, uterus, ovary, salivary gland, thymus and brain stem. Not detected in brain, cerebellum, spinal cord, heart, ventricle, skeletal muscle, liver, placenta and pancreas. In the eye, highly expressed in the retinal ganglion cell layer and inner nuclear layer.

Its subcellular location is the membrane. In terms of biological role, probable potassium channel subunit. No channel activity observed in vitro as protein remains in the endoplasmic reticulum. May need to associate with an as yet unknown partner in order to reach the plasma membrane. In Mus musculus (Mouse), this protein is Potassium channel subfamily K member 7 (Kcnk7).